We begin with the raw amino-acid sequence, 170 residues long: tRNA-splicing endonuclease (170 aa).

Catalysis depends on residues Tyr110, His116, and Lys147.

The protein belongs to the tRNA-intron endonuclease family. Archaeal short subfamily. Homotetramer; although the tetramer contains four active sites, only two participate in the cleavage. Therefore, it should be considered as a dimer of dimers.

It carries out the reaction pretRNA = a 3'-half-tRNA molecule with a 5'-OH end + a 5'-half-tRNA molecule with a 2',3'-cyclic phosphate end + an intron with a 2',3'-cyclic phosphate and a 5'-hydroxyl terminus.. In terms of biological role, endonuclease that removes tRNA introns. Cleaves pre-tRNA at the 5'- and 3'-splice sites to release the intron. The products are an intron and two tRNA half-molecules bearing 2',3' cyclic phosphate and 5'-OH termini. Recognizes a pseudosymmetric substrate in which 2 bulged loops of 3 bases are separated by a stem of 4 bp. This chain is tRNA-splicing endonuclease, found in Pyrococcus furiosus (strain ATCC 43587 / DSM 3638 / JCM 8422 / Vc1).